The following is a 258-amino-acid chain: Tryptophan synthase alpha chain (258 aa).

Residues E44 and D55 each act as proton acceptor in the active site.

It belongs to the TrpA family. As to quaternary structure, tetramer of two alpha and two beta chains.

The catalysed reaction is (1S,2R)-1-C-(indol-3-yl)glycerol 3-phosphate + L-serine = D-glyceraldehyde 3-phosphate + L-tryptophan + H2O. It participates in amino-acid biosynthesis; L-tryptophan biosynthesis; L-tryptophan from chorismate: step 5/5. Functionally, the alpha subunit is responsible for the aldol cleavage of indoleglycerol phosphate to indole and glyceraldehyde 3-phosphate. The sequence is that of Tryptophan synthase alpha chain from Petrotoga mobilis (strain DSM 10674 / SJ95).